The primary structure comprises 259 residues: Gasdermin bGSDM (259 aa).

Residue Cys-3 is the site of S-palmitoyl cysteine attachment. Transmembrane regions (beta stranded) follow at residues 70 to 86 (FQFRASSILQVGVAASV), 98 to 116 (SGSFSSAFSSSNADTIQLS), 162 to 179 (GIRISVADKSKKQVDLSA), and 187 to 203 (AKAKMELKREDTGSYAF). Residues 244-259 (PFAFIGDDAFVDLPES) are C-terminal region.

The protein belongs to the bacterial gasdermin family. As to quaternary structure, monomer in solution. Forms large, homooligomeric ring-shaped pores when inserted in membranes. Post-translationally, palmitoylation helps stabilize the inactive state; may self palmitoylate. Palmitoylation plays a significant role in pore formation.

It is found in the cytoplasm. Its subcellular location is the cell inner membrane. Its activity is regulated as follows. The full-length protein before cleavage is inactive: intramolecular interactions between the N-terminal domain and the C-terminal region as well as the lipid modification, mediate autoinhibition. The pyroptosis-like-inducing activity is carried by the released N-terminal domain (Gasdermin bGSDM, N-terminus). Precursor of a pore-forming protein involved in defense against bacteriophages. Expression of bGSDM and the neighboring protease gene (Ga0098714_109514) is toxic in E.coli on solid medium. Cleavage of this precursor by its dedicated protease releases the active moiety (gasdermin bGSDM, N-terminus) which inserts into membranes, forming pores and triggering cell death. Its function is as follows. Pore-forming protein that causes membrane permeabilization via a pyroptosis-like activity. Makes ring-like pores when released. This is Gasdermin bGSDM from Bradyrhizobium tropiciagri.